Here is an 83-residue protein sequence, read N- to C-terminus: Small ribosomal subunit protein bS16c (83 aa).

This sequence belongs to the bacterial ribosomal protein bS16 family.

The protein resides in the plastid. It localises to the chloroplast. This Chaetosphaeridium globosum (Charophycean green alga) protein is Small ribosomal subunit protein bS16c.